Reading from the N-terminus, the 743-residue chain is UvrABC system protein C (743 aa).

One can recognise a GIY-YIG domain in the interval 16–95 (VDPGVYKFRD…IKEFDPRFNV (80 aa)). Residues 208-243 (DKLVRQLEARMQQASEELDFETAARLRDDVGALRRA) form the UVR domain. Disordered regions lie at residues 497-543 (AEAA…QTGR) and 694-743 (PSAD…TGVE). Over residues 506 to 520 (QASDTDGDQVSDTDG) the composition is skewed to acidic residues. The span at 734 to 743 (QSASQRTGVE) shows a compositional bias: polar residues.

It belongs to the UvrC family. In terms of assembly, interacts with UvrB in an incision complex.

The protein resides in the cytoplasm. The UvrABC repair system catalyzes the recognition and processing of DNA lesions. UvrC both incises the 5' and 3' sides of the lesion. The N-terminal half is responsible for the 3' incision and the C-terminal half is responsible for the 5' incision. The chain is UvrABC system protein C from Rhodococcus opacus (strain B4).